Reading from the N-terminus, the 490-residue chain is Ketol-acid reductoisomerase (NADP(+)) (490 aa).

In terms of domain architecture, KARI N-terminal Rossmann spans 15–208; the sequence is INLQKCKLID…GSHHAGILHS (194 aa). NADP(+) is bound by residues 45 to 48, Arg-68, Ser-78, and 108 to 110; these read CGSQ and DKQ. His-132 is an active-site residue. Gly-158 lines the NADP(+) pocket. KARI C-terminal knotted domains follow at residues 209–344 and 345–484; these read SFIA…KCNI and YYKQ…MTSM. Asp-217, Glu-221, Glu-389, and Glu-393 together coordinate Mg(2+). Ser-414 is a substrate binding site.

Belongs to the ketol-acid reductoisomerase family. Mg(2+) is required as a cofactor.

The enzyme catalyses (2R)-2,3-dihydroxy-3-methylbutanoate + NADP(+) = (2S)-2-acetolactate + NADPH + H(+). It catalyses the reaction (2R,3R)-2,3-dihydroxy-3-methylpentanoate + NADP(+) = (S)-2-ethyl-2-hydroxy-3-oxobutanoate + NADPH + H(+). It participates in amino-acid biosynthesis; L-isoleucine biosynthesis; L-isoleucine from 2-oxobutanoate: step 2/4. The protein operates within amino-acid biosynthesis; L-valine biosynthesis; L-valine from pyruvate: step 2/4. In terms of biological role, involved in the biosynthesis of branched-chain amino acids (BCAA). Catalyzes an alkyl-migration followed by a ketol-acid reduction of (S)-2-acetolactate (S2AL) to yield (R)-2,3-dihydroxy-isovalerate. In the isomerase reaction, S2AL is rearranged via a Mg-dependent methyl migration to produce 3-hydroxy-3-methyl-2-ketobutyrate (HMKB). In the reductase reaction, this 2-ketoacid undergoes a metal-dependent reduction by NADPH to yield (R)-2,3-dihydroxy-isovalerate. The chain is Ketol-acid reductoisomerase (NADP(+)) from Buchnera aphidicola subsp. Melaphis rhois.